The following is a 548-amino-acid chain: Adenine deaminase (548 aa).

It belongs to the metallo-dependent hydrolases superfamily. Adenine deaminase family. Mn(2+) serves as cofactor.

It catalyses the reaction adenine + H2O + H(+) = hypoxanthine + NH4(+). The sequence is that of Adenine deaminase from Borreliella afzelii (strain PKo) (Borrelia afzelii).